The chain runs to 640 residues: Threonine--tRNA ligase (640 aa).

The region spanning 1–61 (MPTITLPDGS…THDATLQIIT (61 aa)) is the TGS domain. Positions 242–533 (DHRKIGKQLD…LIEHYAGVFP (292 aa)) are catalytic. Positions 333, 384, and 510 each coordinate Zn(2+).

It belongs to the class-II aminoacyl-tRNA synthetase family. Homodimer. Zn(2+) serves as cofactor.

The protein localises to the cytoplasm. The catalysed reaction is tRNA(Thr) + L-threonine + ATP = L-threonyl-tRNA(Thr) + AMP + diphosphate + H(+). In terms of biological role, catalyzes the attachment of threonine to tRNA(Thr) in a two-step reaction: L-threonine is first activated by ATP to form Thr-AMP and then transferred to the acceptor end of tRNA(Thr). Also edits incorrectly charged L-seryl-tRNA(Thr). In Pseudomonas putida (strain W619), this protein is Threonine--tRNA ligase.